A 420-amino-acid polypeptide reads, in one-letter code: F-box protein At5g07610 (420 aa).

Positions 1-25 (MSSCSRTRTKAPRSARSRRNGGFSS) are disordered. Residues 7–19 (TRTKAPRSARSRR) show a composition bias toward basic residues. The F-box domain occupies 27-77 (SATIVADIDDVLIQILSFLPIKTLLRFKRVSKRWLSLITNPVFSNRVIKSN).

This is F-box protein At5g07610 from Arabidopsis thaliana (Mouse-ear cress).